A 556-amino-acid chain; its full sequence is Glucose-6-phosphate isomerase (556 aa).

E360 (proton donor) is an active-site residue. Catalysis depends on residues H391 and K519.

It belongs to the GPI family.

It is found in the cytoplasm. It catalyses the reaction alpha-D-glucose 6-phosphate = beta-D-fructose 6-phosphate. It functions in the pathway carbohydrate biosynthesis; gluconeogenesis. Its pathway is carbohydrate degradation; glycolysis; D-glyceraldehyde 3-phosphate and glycerone phosphate from D-glucose: step 2/4. In terms of biological role, catalyzes the reversible isomerization of glucose-6-phosphate to fructose-6-phosphate. This chain is Glucose-6-phosphate isomerase, found in Acinetobacter baumannii (strain ATCC 17978 / DSM 105126 / CIP 53.77 / LMG 1025 / NCDC KC755 / 5377).